A 439-amino-acid polypeptide reads, in one-letter code: Histidinol dehydrogenase (439 aa).

The NAD(+) site is built by tyrosine 132, glutamine 194, and asparagine 217. Substrate-binding residues include serine 244, glutamine 266, and histidine 269. Residues glutamine 266 and histidine 269 each coordinate Zn(2+). Catalysis depends on proton acceptor residues glutamate 335 and histidine 336. The substrate site is built by histidine 336, aspartate 369, glutamate 423, and histidine 428. Aspartate 369 contributes to the Zn(2+) binding site. Residue histidine 428 coordinates Zn(2+).

Belongs to the histidinol dehydrogenase family. Zn(2+) is required as a cofactor.

It catalyses the reaction L-histidinol + 2 NAD(+) + H2O = L-histidine + 2 NADH + 3 H(+). The protein operates within amino-acid biosynthesis; L-histidine biosynthesis; L-histidine from 5-phospho-alpha-D-ribose 1-diphosphate: step 9/9. In terms of biological role, catalyzes the sequential NAD-dependent oxidations of L-histidinol to L-histidinaldehyde and then to L-histidine. The sequence is that of Histidinol dehydrogenase (his2) from Schizosaccharomyces pombe (strain 972 / ATCC 24843) (Fission yeast).